We begin with the raw amino-acid sequence, 738 residues long: Translation initiation factor IF-2 (738 aa).

Residues 1 to 10 (MNSMRISGHQ) show a composition bias toward polar residues. The tract at residues 1-150 (MNSMRISGHQ…PTTVRAPVRP (150 aa)) is disordered. Over residues 22-102 (AGGGRGPGNP…GGRGPSGGRG (81 aa)) the composition is skewed to gly residues. Residues 103–120 (GDGRRREESPTDHEDGRI) show a composition bias toward basic and acidic residues. Residues 121–143 (NRSGRSTSTTTTRTSSTLARPTT) show a composition bias toward low complexity. Positions 238-405 (PRPPVVTIMG…MILLVADLNE (168 aa)) constitute a tr-type G domain. The tract at residues 247-254 (GHVDHGKT) is G1. 247–254 (GHVDHGKT) is a GTP binding site. The segment at 272–276 (GITQH) is G2. Residues 293-296 (DTPG) are G3. Residues 293–297 (DTPGH) and 347–350 (NKID) each bind GTP. The segment at 347 to 350 (NKID) is G4. Residues 383 to 385 (SAK) form a G5 region.

This sequence belongs to the TRAFAC class translation factor GTPase superfamily. Classic translation factor GTPase family. IF-2 subfamily.

The protein localises to the cytoplasm. In terms of biological role, one of the essential components for the initiation of protein synthesis. Protects formylmethionyl-tRNA from spontaneous hydrolysis and promotes its binding to the 30S ribosomal subunits. Also involved in the hydrolysis of GTP during the formation of the 70S ribosomal complex. The sequence is that of Translation initiation factor IF-2 from Roseiflexus castenholzii (strain DSM 13941 / HLO8).